Reading from the N-terminus, the 199-residue chain is MFVTFEGIDGSGKTAQLTAAGEFLKASGKQVVLTREPGTISCIRDYVLASDMDIRTEALLYSADRAENIAKNVIPALNAGKVVLQDRYLDSFLAYQLADNKLVETDIMRLFEFSSQGLRPDLTLLFDLTPACAQERLENRDRIERKPIDFHSKVRNIYLKLSADNTDRIRVIDASQSFSKIHQQVIYHIERKLGGTHSA.

G7–T14 contacts ATP.

The protein belongs to the thymidylate kinase family.

It carries out the reaction dTMP + ATP = dTDP + ADP. Functionally, phosphorylation of dTMP to form dTDP in both de novo and salvage pathways of dTTP synthesis. The polypeptide is Thymidylate kinase (Tropheryma whipplei (strain Twist) (Whipple's bacillus)).